We begin with the raw amino-acid sequence, 355 residues long: Uroporphyrinogen decarboxylase (355 aa).

Substrate-binding positions include 38-42 (RQAGR), Asp87, Tyr162, Ser217, and His331.

It belongs to the uroporphyrinogen decarboxylase family. In terms of assembly, homodimer.

The protein resides in the cytoplasm. The catalysed reaction is uroporphyrinogen III + 4 H(+) = coproporphyrinogen III + 4 CO2. The protein operates within porphyrin-containing compound metabolism; protoporphyrin-IX biosynthesis; coproporphyrinogen-III from 5-aminolevulinate: step 4/4. Its function is as follows. Catalyzes the decarboxylation of four acetate groups of uroporphyrinogen-III to yield coproporphyrinogen-III. The polypeptide is Uroporphyrinogen decarboxylase (Streptomyces coelicolor (strain ATCC BAA-471 / A3(2) / M145)).